The sequence spans 508 residues: MIIWKDTAKNMSLLSKSVPAKYAVDFEVPKGITEGYVTSDKKRFTYHVSISSVAPYSNESDVIQKKKSGLKSIMEIEKIQKIEPISIMEFRSSGKRIDELLTYAIAERETAEIREKYEYEKKVSSQVLDVIAEAKKLGYNIPESVAEEILRRKEEWGEKKYREILKRIGEEIQDELIDPYEAVGIIAAQSIGEPGTQMTMRTFHFAGVREMNVTLGLPRLIEIVDARRIPSTPSMTIYLKPEFETNDEVVMDVVKRLENTSVSDVADIITDIGELTITVRPDPNKMNDRLINQDDLVNAIYKVKGVTVMEESGQIIVKPQQESFKKLYLLQEQIKALPIKGISGIKRAIARVEGKEHRWVIYTQGSNLKDVLEVDEVDPTRTYTNDIVEIATVLGIEAARNAILNEAQRTLQEQGLNVDVRHLMLVADMMTFSGSVRAVGRTGISGRKSSVLARAAFEITTKHLLRAGIMGEVDKLAGVAENIIVGQPITLGTGAVDIIYKGYPKTKK.

The segment at 1–123 (MIIWKDTAKN…REKYEYEKKV (123 aa)) is unknown. The tract at residues 124-508 (SSQVLDVIAE…IYKGYPKTKK (385 aa)) is DNA-directed RNA polymerase subunit Rpo1C.

Belongs to the RNA polymerase beta' chain family. In terms of assembly, part of the RNA polymerase complex.

The protein resides in the cytoplasm. It catalyses the reaction RNA(n) + a ribonucleoside 5'-triphosphate = RNA(n+1) + diphosphate. Functionally, DNA-dependent RNA polymerase (RNAP) catalyzes the transcription of DNA into RNA using the four ribonucleoside triphosphates as substrates. Forms part of the jaw domain. The polypeptide is DNA-directed RNA polymerase subunit Rpo1C (Thermoplasma volcanium (strain ATCC 51530 / DSM 4299 / JCM 9571 / NBRC 15438 / GSS1)).